We begin with the raw amino-acid sequence, 331 residues long: Ketol-acid reductoisomerase (NADP(+)) (331 aa).

The KARI N-terminal Rossmann domain occupies 2 to 181 (IKKYYESDAD…GATRAVVFET (180 aa)). Residues 25 to 28 (YGSQ), arginine 48, serine 52, and 82 to 85 (DESQ) each bind NADP(+). Histidine 107 is an active-site residue. Glycine 133 contributes to the NADP(+) binding site. A KARI C-terminal knotted domain is found at 182-327 (TFREETETDL…AEIRGLMPQF (146 aa)). Mg(2+) contacts are provided by aspartate 190, glutamate 194, glutamate 226, and glutamate 230. Serine 251 contacts substrate.

This sequence belongs to the ketol-acid reductoisomerase family. Mg(2+) is required as a cofactor.

It carries out the reaction (2R)-2,3-dihydroxy-3-methylbutanoate + NADP(+) = (2S)-2-acetolactate + NADPH + H(+). The enzyme catalyses (2R,3R)-2,3-dihydroxy-3-methylpentanoate + NADP(+) = (S)-2-ethyl-2-hydroxy-3-oxobutanoate + NADPH + H(+). The protein operates within amino-acid biosynthesis; L-isoleucine biosynthesis; L-isoleucine from 2-oxobutanoate: step 2/4. It participates in amino-acid biosynthesis; L-valine biosynthesis; L-valine from pyruvate: step 2/4. Functionally, involved in the biosynthesis of branched-chain amino acids (BCAA). Catalyzes an alkyl-migration followed by a ketol-acid reduction of (S)-2-acetolactate (S2AL) to yield (R)-2,3-dihydroxy-isovalerate. In the isomerase reaction, S2AL is rearranged via a Mg-dependent methyl migration to produce 3-hydroxy-3-methyl-2-ketobutyrate (HMKB). In the reductase reaction, this 2-ketoacid undergoes a metal-dependent reduction by NADPH to yield (R)-2,3-dihydroxy-isovalerate. In Methanosphaerula palustris (strain ATCC BAA-1556 / DSM 19958 / E1-9c), this protein is Ketol-acid reductoisomerase (NADP(+)).